A 40-amino-acid polypeptide reads, in one-letter code: Snaclec LmrLEC-1 (40 aa).

A disulfide bridge connects residues Cys-2 and Cys-13.

Belongs to the snaclec family. As to quaternary structure, dimer (non-covalently linked) of heterodimers of subunits alpha and beta (disulfide-linked). As to expression, expressed by the venom gland.

It is found in the secreted. Interferes with one step of hemostasis (modulation of platelet aggregation, or coagulation cascade, for example). This is Snaclec LmrLEC-1 from Lachesis muta rhombeata (Bushmaster).